A 323-amino-acid chain; its full sequence is tRNA (guanine(9)-N1)-methyltransferase (323 aa).

Residues 1-16 are compositionally biased toward polar residues; sequence MTEQTSEATVVNNSPA. Disordered regions lie at residues 1–34 and 192–215; these read MTEQTSEATVVNNSPAPTIPKIKREKPTPEEIEE and TGAPNSESKDNDGNSNSNTTNSTD. A compositionally biased stretch (basic and acidic residues) spans 25–34; it reads EKPTPEEIEE. Residues 99–319 enclose the SAM-dependent MTase TRM10-type domain; that stretch reads KAQPIPSRQI…KVLPPRKIKS (221 aa). The segment covering 204 to 215 has biased composition (low complexity); the sequence is GNSNSNTTNSTD. Residues 225 to 226, Gly-245, 249 to 253, Cys-257, Leu-271, and 283 to 285 each bind S-adenosyl-L-methionine; these read LT, DKNRH, and HVL. Asp-249 functions as the Proton acceptor in the catalytic mechanism.

It belongs to the class IV-like SAM-binding methyltransferase superfamily. TRM10 family. Monomer.

The protein resides in the cytoplasm. It localises to the nucleus. It carries out the reaction guanosine(9) in tRNA + S-adenosyl-L-methionine = N(1)-methylguanosine(9) in tRNA + S-adenosyl-L-homocysteine + H(+). Its function is as follows. S-adenosyl-L-methionine-dependent guanine N(1)-methyltransferase that catalyzes the formation of N(1)-methylguanine at position 9 (m1G9) in cytoplasmic tRNA. This is tRNA (guanine(9)-N1)-methyltransferase from Candida albicans (strain SC5314 / ATCC MYA-2876) (Yeast).